The sequence spans 254 residues: Type III pantothenate kinase (254 aa).

ATP is bound at residue 6–13 (DVGNTNTV). Substrate is bound by residues Y100 and 107 to 110 (GADR). Catalysis depends on D109, which acts as the Proton acceptor. D129 contacts K(+). T132 serves as a coordination point for ATP. Residue T184 participates in substrate binding.

This sequence belongs to the type III pantothenate kinase family. As to quaternary structure, homodimer. It depends on NH4(+) as a cofactor. The cofactor is K(+).

It is found in the cytoplasm. The enzyme catalyses (R)-pantothenate + ATP = (R)-4'-phosphopantothenate + ADP + H(+). It participates in cofactor biosynthesis; coenzyme A biosynthesis; CoA from (R)-pantothenate: step 1/5. Functionally, catalyzes the phosphorylation of pantothenate (Pan), the first step in CoA biosynthesis. The sequence is that of Type III pantothenate kinase from Syntrophus aciditrophicus (strain SB).